A 149-amino-acid chain; its full sequence is Deoxyuridine 5'-triphosphate nucleotidohydrolase (149 aa).

Substrate-binding positions include 68-70 (RSG), Asn81, 85-87 (LID), and Met95.

It belongs to the dUTPase family. Requires Mg(2+) as cofactor.

It catalyses the reaction dUTP + H2O = dUMP + diphosphate + H(+). The protein operates within pyrimidine metabolism; dUMP biosynthesis; dUMP from dCTP (dUTP route): step 2/2. Its function is as follows. This enzyme is involved in nucleotide metabolism: it produces dUMP, the immediate precursor of thymidine nucleotides and it decreases the intracellular concentration of dUTP so that uracil cannot be incorporated into DNA. In Methylibium petroleiphilum (strain ATCC BAA-1232 / LMG 22953 / PM1), this protein is Deoxyuridine 5'-triphosphate nucleotidohydrolase.